Consider the following 835-residue polypeptide: MLEEPIDALETEFENALNSLEDNQLSKINGQLPEQVHVFPLLRRPFFPGMAAPLVIEPGPFYEVLKVVAKSDHKCVGLVLTRSEQAEIYKVGFSDLYQIGVLARVLRIIPMEQGGAQVILNMERRIKIEKPTSETKTLKANVSYIEDDPILTTELKAYAISILSTIKELLKLNPLFKEELQIFLGHSDFTEPGKLADFAVALTTASREELQDVLETFDIRKRIDKALILLKKELDISILQHNINQKIEATINKSQKDFFLREQLKTIKKELGIERDDKSLDREKFEARLKERVVPSDVMKVITEELEKLSVLDMQSAEYSVVRGYLDWLTTIPWGIYSQENHNLEEAEKILAHDHYGLEDIKQRILEFIGVGKLAKGVRGSIICLVGPPGVGKTSIGKSIARALNRKFYRFSVGGMRDEAEIKGHRRTYVGAMPGKMIQALKYCQTMNPVIMLDEVDKMGKSFQGDPASALLEVLDPEQNAEFLDHYLDVRCNLSEVLFIVTANVLDTIPEPLKDRMDILRLSGYIMQEKLEIAKKYLIPRNRKEMGLKALEVSFTQEALRSIINGYARESGVRNLENLLKKILRKLAVNIVREQEEHDKEQAKKKKSSRSKKPIAFVPTKHSITPSNLKDFLGKPVFTSDRFYERTPVGVCMGLAWTAMGGATLYIESIKVAGEKTVMKLTGQAGDVMKESAEIAWSYVHSSIHKYAPGYTFFEKSQVHIHIPEGATPKDGPSAGITMVTSLLSLILDTPVLDNLGMTGELTLTGRVLPIGGVKEKLVAARRSGLKVLIFPKDNLRDYEELPEYIRKGITVHFVDHYDQVFKISFPNKHQMKLC.

The Lon N-terminal domain maps to 36 to 234 (VHVFPLLRRP…KALILLKKEL (199 aa)). 387–394 (GPPGVGKT) serves as a coordination point for ATP. Residues 646 to 828 (RTPVGVCMGL…DQVFKISFPN (183 aa)) form the Lon proteolytic domain. Residues Ser-734 and Lys-777 contribute to the active site.

The protein belongs to the peptidase S16 family. In terms of assembly, homohexamer. Organized in a ring with a central cavity.

It is found in the cytoplasm. It catalyses the reaction Hydrolysis of proteins in presence of ATP.. In terms of biological role, ATP-dependent serine protease that mediates the selective degradation of mutant and abnormal proteins as well as certain short-lived regulatory proteins. Required for cellular homeostasis and for survival from DNA damage and developmental changes induced by stress. Degrades polypeptides processively to yield small peptide fragments that are 5 to 10 amino acids long. Binds to DNA in a double-stranded, site-specific manner. In Protochlamydia amoebophila (strain UWE25), this protein is Lon protease.